A 537-amino-acid polypeptide reads, in one-letter code: Cytochrome P450 monooxygenase yanC (537 aa).

An N-terminal signal peptide occupies residues 1–21 (MALVHLTALAACGLLLVILRA). Cys449 lines the heme pocket.

This sequence belongs to the cytochrome P450 family. It depends on heme as a cofactor.

It functions in the pathway secondary metabolite biosynthesis; terpenoid biosynthesis. Functionally, cytochrome P450 monooxygenase; part of the gene cluster that mediates the biosynthesis of yanuthone D, a fungal isoprenoid epoxycyclohexenone that acts as an antibiotic against fungi and bacteria. The first step of the pathway is the synthesis of 6-methylsalicylic acid (6-MSA) by the polyketide synthase yanA. 6-MSA is then converted to m-cresol by the decarboxylase yanB. The cytochrome P450 monooxygenase yanC then catalyzes the oxidation of m-cresol to toluquinol. Epoxidation of toluquinol is then performed by the short chain dehydrogenase yanD, with the help of yanE, and a further prenylation by yanG leads to 7-deacetoxyyanuthone A. The next step is the hydroxylation of C-22 of 7-deacetoxyyanuthone A by the cytochrome P450 monooxygenase yanH to yield 22-deacetylyanuthone A. O-Mevalon transferase yanI then attaches mevalon to the hydroxyl group of 22-deacetylyanuthone A to produce yanuthone E. Finally, the FAD-dependent monooxygenase yanF oxidizes the hydroxyl group at C15 of yanuthone E to form yanuthone D. Furthermore, several branching points in the pathway lead to the production of yanuthones F and G from 7-deacetoxyyanuthone A; yanuthones H and I from 22-deacetylyanuthone A; and yanuthone J from yanuthone E. YanC is also involved in the synthesis of yanuthone X1 which does not have 6-methylsalicylic acid (6-MSA) as precursor. The polypeptide is Cytochrome P450 monooxygenase yanC (Aspergillus niger (strain ATCC 1015 / CBS 113.46 / FGSC A1144 / LSHB Ac4 / NCTC 3858a / NRRL 328 / USDA 3528.7)).